A 442-amino-acid polypeptide reads, in one-letter code: Signal recognition particle 54 kDa protein (442 aa).

Residues 106 to 113, 186 to 190, and 244 to 247 each bind GTP; these read GLQGSGKT, DTAGR, and TKLD.

Belongs to the GTP-binding SRP family. SRP54 subfamily. As to quaternary structure, part of the signal recognition particle protein translocation system, which is composed of SRP and FtsY. Archaeal SRP consists of a 7S RNA molecule of 300 nucleotides and two protein subunits: SRP54 and SRP19.

The protein resides in the cytoplasm. The catalysed reaction is GTP + H2O = GDP + phosphate + H(+). Functionally, involved in targeting and insertion of nascent membrane proteins into the cytoplasmic membrane. Binds to the hydrophobic signal sequence of the ribosome-nascent chain (RNC) as it emerges from the ribosomes. The SRP-RNC complex is then targeted to the cytoplasmic membrane where it interacts with the SRP receptor FtsY. The polypeptide is Signal recognition particle 54 kDa protein (Methanothermobacter thermautotrophicus (strain ATCC 29096 / DSM 1053 / JCM 10044 / NBRC 100330 / Delta H) (Methanobacterium thermoautotrophicum)).